We begin with the raw amino-acid sequence, 62 residues long: Amolopin-P1 (62 aa).

A signal peptide spans 1-22 (MFPMKKSLLLLFFFGPISLSFC). A propeptide spanning residues 23 to 44 (DQERGADEEENGGEVTEQEVKR) is cleaved from the precursor.

In terms of tissue distribution, expressed by the skin glands.

The protein localises to the secreted. Functionally, antimicrobial peptide with activity against Gram-positive bacteria. Has been tested against S.aureus (MIC=37.5 ug/mL), against B.pumilus (MIC=75.0 ug/mL), B.cereus (no activity detected). Does not show activity against Gram-negative bacteria (E.coli, B.dysenteriae, A.calcoaceticus, P.aeruginosa) and fungi (C.albicans). Does not show hemolytic activity against rabbit erythrocytes. In Amolops loloensis (Lolokou Sucker Frog), this protein is Amolopin-P1.